The chain runs to 260 residues: Segregation and condensation protein A (260 aa).

Belongs to the ScpA family. As to quaternary structure, component of a cohesin-like complex composed of ScpA, ScpB and the Smc homodimer, in which ScpA and ScpB bind to the head domain of Smc. The presence of the three proteins is required for the association of the complex with DNA.

Its subcellular location is the cytoplasm. Participates in chromosomal partition during cell division. May act via the formation of a condensin-like complex containing Smc and ScpB that pull DNA away from mid-cell into both cell halves. This is Segregation and condensation protein A from Halalkalibacterium halodurans (strain ATCC BAA-125 / DSM 18197 / FERM 7344 / JCM 9153 / C-125) (Bacillus halodurans).